Reading from the N-terminus, the 197-residue chain is FMN-dependent NADH:quinone oxidoreductase (197 aa).

Residues S10, 16-18, 93-96, and 137-140 each bind FMN; these read SQS, MYNF, and TRGG.

The protein belongs to the azoreductase type 1 family. In terms of assembly, homodimer. FMN is required as a cofactor.

The enzyme catalyses 2 a quinone + NADH + H(+) = 2 a 1,4-benzosemiquinone + NAD(+). It catalyses the reaction N,N-dimethyl-1,4-phenylenediamine + anthranilate + 2 NAD(+) = 2-(4-dimethylaminophenyl)diazenylbenzoate + 2 NADH + 2 H(+). Functionally, quinone reductase that provides resistance to thiol-specific stress caused by electrophilic quinones. In terms of biological role, also exhibits azoreductase activity. Catalyzes the reductive cleavage of the azo bond in aromatic azo compounds to the corresponding amines. The polypeptide is FMN-dependent NADH:quinone oxidoreductase (Shewanella loihica (strain ATCC BAA-1088 / PV-4)).